A 300-amino-acid chain; its full sequence is 33 kDa chaperonin (300 aa).

Disulfide bonds link cysteine 235/cysteine 237 and cysteine 269/cysteine 272.

Belongs to the HSP33 family. In terms of processing, under oxidizing conditions two disulfide bonds are formed involving the reactive cysteines. Under reducing conditions zinc is bound to the reactive cysteines and the protein is inactive.

The protein localises to the cytoplasm. In terms of biological role, redox regulated molecular chaperone. Protects both thermally unfolding and oxidatively damaged proteins from irreversible aggregation. Plays an important role in the bacterial defense system toward oxidative stress. This Pseudomonas fluorescens (strain Pf0-1) protein is 33 kDa chaperonin.